The following is a 685-amino-acid chain: MIKNDFNQPKGSTIGVLKDGRTIQEAFDSLGYLGVAVLSPANYGAKGDGKADDTIPLRQCVQDACALGGRVVGTVGAEYKISGTIAGTVGDGKYVELDFTGSKFVPTTDDAVMTITGVATSPVAEVTVEVVSVNLGNGSTNTIAMKVTAPGGHSFTKKGEIGKAWSPVLCLNNDLSTQYAGEPFVVGLVESSTVFYTTSVFTELYMGTSLKVIRVPTTQVVVKGLDVESEWTTGWKASTLTLSGLLRPFVYKPKCKNINGPFVNLTGCYGATVFLPEGDNLRNAPSEGAYGYFVNDSASFGSTIYGINCTNARHAYTTSSPRSEPTDDKWWLKGRTLFSEITNGLGTGCHNAFDTHSPSYGIKFTNCRAVGDFRGVDTGGAGFQIRGDRSSLVDCTAINSKIGAAFTAVNISGNSELYISGFTYEGPAGHLALSLSGKAGQVNRVTISDSRWKTLEQYATAITNVEVSASNVEAVVDSATTASAAWRIGEGATLRTRGGAARFSAGSGHSVISLAASGAKVDVGDLEVTGSSFMQYLLATLSQYAGDVYIEADLDGAIPGNPVGGGGTDLKAAVVYTAGNKFRRPLAYRALTIGNANGNTLGLNYSGHDVITWEITATVAGANVNGITPGAFIGQQLNIGSSPASTQQLIINNGTNIAMGHAVTLEAGRGVTLYWNGANWRSGSV.

In the N-terminal section; belongs to the Przondovirus depolymerase 2 family. Homotrimer. Interacts (via N-terminus) with depolymerase 1 (via N-terminus); this interaction probably gives rise to a branched tailspike.

Its subcellular location is the virion. In terms of biological role, functions as a receptor binding protein (RBP) and probably mediates the attachment to the host capsular exopolysaccharides. Displays a depolymerase activity that specifically degrades the K5-type polysaccharides of Klebsiella pneumoniae capsule, which allows the phage to reach the host cell membrane and bind the entry receptor. This is Depolymerase 2, capsule K5-specific from Klebsiella (Bacteriophage K5-2).